Consider the following 651-residue polypeptide: Acetyl-coenzyme A synthetase (651 aa).

CoA is bound by residues 191–194, Thr311, and Asn335; that span reads RGGK. Residues 387–389, 411–416, Asp500, and Arg515 each bind ATP; these read GEP and DTWWQT. Ser523 contributes to the CoA binding site. Arg526 contributes to the ATP binding site. Mg(2+) contacts are provided by Val537, His539, and Val542. Arg584 is a CoA binding site. The residue at position 609 (Lys609) is an N6-acetyllysine.

This sequence belongs to the ATP-dependent AMP-binding enzyme family. It depends on Mg(2+) as a cofactor. In terms of processing, acetylated. Deacetylation by the SIR2-homolog deacetylase activates the enzyme.

The catalysed reaction is acetate + ATP + CoA = acetyl-CoA + AMP + diphosphate. Its function is as follows. Catalyzes the conversion of acetate into acetyl-CoA (AcCoA), an essential intermediate at the junction of anabolic and catabolic pathways. AcsA undergoes a two-step reaction. In the first half reaction, AcsA combines acetate with ATP to form acetyl-adenylate (AcAMP) intermediate. In the second half reaction, it can then transfer the acetyl group from AcAMP to the sulfhydryl group of CoA, forming the product AcCoA. The chain is Acetyl-coenzyme A synthetase from Pseudomonas syringae pv. tomato (strain ATCC BAA-871 / DC3000).